The sequence spans 146 residues: Large ribosomal subunit protein uL15 (146 aa).

Residues 1-10 (MTLKLHDLRP) show a composition bias toward basic and acidic residues. Positions 1-41 (MTLKLHDLRPARGSKIARTRVGRGDGSKGKTAGRGTKGTRA) are disordered.

The protein belongs to the universal ribosomal protein uL15 family. In terms of assembly, part of the 50S ribosomal subunit.

Binds to the 23S rRNA. This is Large ribosomal subunit protein uL15 from Mycobacterium tuberculosis (strain ATCC 25177 / H37Ra).